Reading from the N-terminus, the 186-residue chain is Trafficking protein particle complex subunit 5 (186 aa).

It belongs to the TRAPP small subunits family. BET3 subfamily. As to quaternary structure, part of the multisubunit TRAPP (transport protein particle) complex.

Its subcellular location is the golgi apparatus. It localises to the cis-Golgi network. It is found in the endoplasmic reticulum. Functionally, may play a role in vesicular transport from endoplasmic reticulum to Golgi. The protein is Trafficking protein particle complex subunit 5 (trappc5) of Dictyostelium discoideum (Social amoeba).